The sequence spans 249 residues: MVAFDANEALTPCREGRGIGAILFDRERLRQAEVGLFSPQHWGSKARPVGEGGRGSAWFIDAPFGASVLRHYLRGGLAAKISHDQYLWRGSDRTRSFAEFRLMRALREKKLPVPRPIAAYYMREGLRYRAAILMERIEGVRSLADRALVAGRGAPWEETGRLIARFHRAGLDHADLNAHNILFDGNGHGWLIDFDRGVIRIPATAWRERNLKRLLRSLIKLRGERSVEDVQKDYARLRRAYDMAWNRGT.

The active site involves Asp-175.

This sequence belongs to the protein kinase superfamily. KdkA/RfaP family.

It is found in the cell inner membrane. The enzyme catalyses an alpha-Kdo-(2-&gt;6)-lipid IVA + ATP = a 4-O-phospho-alpha-Kdo-(2-&gt;6)-lipid IVA + ADP + H(+). It participates in bacterial outer membrane biogenesis; LPS core biosynthesis. Its function is as follows. Catalyzes the ATP-dependent phosphorylation of the 3-deoxy-D-manno-octulosonic acid (Kdo) residue in Kdo-lipid IV(A) at the 4-OH position. This chain is 3-deoxy-D-manno-octulosonic acid kinase, found in Stenotrophomonas maltophilia (strain K279a).